Consider the following 640-residue polypeptide: Threonine--tRNA ligase (640 aa).

The 61-residue stretch at 1 to 61 (MVKITYPDNS…MQDSTIKLIT (61 aa)) folds into the TGS domain. Positions 242 to 533 (DHRKLGPKLN…LIENFAGEFP (292 aa)) are catalytic. Positions 334, 385, and 510 each coordinate Zn(2+).

The protein belongs to the class-II aminoacyl-tRNA synthetase family. In terms of assembly, homodimer. Requires Zn(2+) as cofactor.

The protein localises to the cytoplasm. It carries out the reaction tRNA(Thr) + L-threonine + ATP = L-threonyl-tRNA(Thr) + AMP + diphosphate + H(+). Catalyzes the attachment of threonine to tRNA(Thr) in a two-step reaction: L-threonine is first activated by ATP to form Thr-AMP and then transferred to the acceptor end of tRNA(Thr). Also edits incorrectly charged L-seryl-tRNA(Thr). The protein is Threonine--tRNA ligase of Petrotoga mobilis (strain DSM 10674 / SJ95).